Here is a 255-residue protein sequence, read N- to C-terminus: tRNA (guanine-N(1)-)-methyltransferase (255 aa).

Residues G112 and 131-136 (LGDYVL) contribute to the S-adenosyl-L-methionine site.

Belongs to the RNA methyltransferase TrmD family. As to quaternary structure, homodimer.

Its subcellular location is the cytoplasm. The enzyme catalyses guanosine(37) in tRNA + S-adenosyl-L-methionine = N(1)-methylguanosine(37) in tRNA + S-adenosyl-L-homocysteine + H(+). Its function is as follows. Specifically methylates guanosine-37 in various tRNAs. In Lacticaseibacillus paracasei (strain ATCC 334 / BCRC 17002 / CCUG 31169 / CIP 107868 / KCTC 3260 / NRRL B-441) (Lactobacillus paracasei), this protein is tRNA (guanine-N(1)-)-methyltransferase.